Consider the following 122-residue polypeptide: UPF0102 protein Smed_3545 (122 aa).

Belongs to the UPF0102 family.

The sequence is that of UPF0102 protein Smed_3545 from Sinorhizobium medicae (strain WSM419) (Ensifer medicae).